The following is a 173-amino-acid chain: MAGVGRTMIAPLLVLNLIMYLIVIGFASWNLNHYINGETNHPGVAGNGATFYFLVFAILAGVVGAASKLAGVHHVRSWGAHSLAAGAASALIAWAITALAFGLACKEIHIGGYRGWRLRVLEAFVIILAFTQLLYVAMLHGGLFSGNHAAGAGGYGGDYPADHHHKPAAAARV.

The next 4 membrane-spanning stretches (helical) occupy residues 9 to 29 (IAPL…FASW), 43 to 63 (GVAG…AGVV), 83 to 103 (LAAG…AFGL), and 124 to 144 (FVII…GGLF).

As to expression, expressed in roots, leaf blades, leaf sheaths, stems, spikelets and embryos.

The protein resides in the membrane. May be involved in abiotic stress response through abscisic acid-dependent signaling. This Oryza sativa subsp. japonica (Rice) protein is Membrane protein PM19L.